The primary structure comprises 476 residues: Calcium uptake protein 1, mitochondrial (476 aa).

A mitochondrion-targeting transit peptide spans M1–L33. The interval S68–F106 is disordered. The polybasic region stretch occupies residues K99–K110. At S122 the chain carries Phosphoserine. The interval K126 to R129 is k/R-ring. The EF-hand 1 domain occupies T218–Q253. 5 residues coordinate Ca(2+): D231, N233, D235, E237, and E242. A k/R-ring region spans residues R259–R263. Residues L408 to R443 enclose the EF-hand 2 domain. Residues D421, D423, N425, E427, and E432 each contribute to the Ca(2+) site. R455 is modified (asymmetric dimethylarginine). The segment at R455–Q465 is C-helix region.

The protein belongs to the MICU1 family. MICU1 subfamily. Heterodimer; disulfide-linked; heterodimerizes with MICU2 or MICU3. Homodimer; disulfide-linked. Component of the uniplex complex, composed of MCU, EMRE/SMDT1, MICU1 and MICU2 (or MICU3) in a 4:4:1:1 stoichiometry. The composition of calcium sensors within the uniplex complex can differ depending on tissues: a MICU1 homodimer can be present instead of the MICU1-MICU2 heterodimer in skeletal-muscle and kidney. MICU1 is recruited to the uniplex complex by EMRE/SMDT1, and it associates with MCU at low calcium levels, occluding the pore of the MCU channel. Associates with the MICOS complex. Interacts with SLC25A23. Interacts with CHCHD4/MIA40; which introduces the interchain disulfide bond with MICU2. Interacts (when methylated) with UCP2; leading to decrease the calcium sensitivity of MICU1. Post-translationally, phosphorylation at Ser-122 by AKT1 impairs its maturation and stability. In terms of processing, asymmetric dimethylation at Arg-455 by PRMT1 decreases the calcium sensitivity of MICU1 by promoting interaction with UCP2. Degraded by YME1L1 when not complexed as homodimer or heterodimer. Not degraded when complexed as homodimer or heterodimer; the presence of the interchain disulfide bond protecting MICU1 from degradation by YME1L1. As to expression, expressed in epithelial cell lines. Strongly expressed in epidermal keratinocytes and dermal endothelial cells.

It is found in the mitochondrion intermembrane space. Its subcellular location is the mitochondrion inner membrane. Its activity is regulated as follows. Activated by spermine, kaempferol and SB202190, which bind MICU1 and prevent MCU pore occlusion in absence of calcium. Its function is as follows. Calcium sensor of the mitochondrial calcium uniporter (MCU) channel, which senses calcium level via its EF-hand domains. MICU1 and MICU2 (or MICU3) form a disulfide-linked heterodimer that stimulates and inhibits MCU activity, depending on the concentration of calcium. At low calcium levels, MICU1 occludes the pore of the MCU channel, preventing mitochondrial calcium uptake. At higher calcium levels, calcium-binding to MICU1 and MICU2 (or MICU3) induces a conformational change that weakens MCU-MICU1 interactions and moves the MICU1-MICU2 heterodimer away from the pore, allowing calcium permeation through the MCU channel. Also required to protect against manganese toxicity by preventing manganese uptake by MCU: mechanistically, manganese-binding to its EF-hand domains does not induce any conformational change, maintaining MCU pore occlusion. Also acts as a barrier for inhibitors of the MCU channel, such as ruthenium red or its derivative Ru360. Acts as a regulator of mitochondrial cristae structure independently of its ability to regulate the mitochondrial calcium uniporter channel. Regulates glucose-dependent insulin secretion in pancreatic beta-cells by regulating mitochondrial calcium uptake. Induces T-helper 1-mediated autoreactivity, which is accompanied by the release of IFNG. Functionally, isoform that regulates mitochondrial calcium uniporter (MCU) in the skeletal muscle. Compared to other isoforms, this isoform has higher affinity for calcium, promoting mitochondrial calcium uptake at lower calcium concentrations. This allows a rapid response of mitochondrial metabolism and ensures sustained ATP production needed for resistance and strenuous exercise. The polypeptide is Calcium uptake protein 1, mitochondrial (Homo sapiens (Human)).